A 169-amino-acid chain; its full sequence is Transcription antitermination protein NusB (169 aa).

Over residues 1-19 the composition is skewed to basic and acidic residues; it reads MAEMKKTIDNKPAPKGEKK. The interval 1–22 is disordered; it reads MAEMKKTIDNKPAPKGEKKANR.

It belongs to the NusB family.

Involved in transcription antitermination. Required for transcription of ribosomal RNA (rRNA) genes. Binds specifically to the boxA antiterminator sequence of the ribosomal RNA (rrn) operons. This is Transcription antitermination protein NusB from Rhodopseudomonas palustris (strain BisB18).